The primary structure comprises 95 residues: Beta-defensin 132 (95 aa).

A signal peptide spans 1–22 (MKFLLLVLAALGFLTQVIPASA). Disulfide bonds link C27–C55, C35–C49, and C39–C56. The disordered stretch occupies residues 74-95 (HWQSRRRNTQRKDKKQQTTVTS). Residues 76-87 (QSRRRNTQRKDK) show a composition bias toward basic residues.

The protein belongs to the beta-defensin family.

It localises to the secreted. In terms of biological role, has antibacterial activity. The chain is Beta-defensin 132 (DEFB132) from Homo sapiens (Human).